Reading from the N-terminus, the 394-residue chain is Zinc finger and SCAN domain-containing protein 9 (394 aa).

A Glycyl lysine isopeptide (Lys-Gly) (interchain with G-Cter in SUMO2) cross-link involves residue Lys26. The 83-residue stretch at 52 to 134 (RRHFRQLCYQ…ILLEDLEREL (83 aa)) folds into the SCAN box domain. Residues Lys215 and Lys238 each participate in a glycyl lysine isopeptide (Lys-Gly) (interchain with G-Cter in SUMO2) cross-link. C2H2-type zinc fingers lie at residues 254-276 (HKCD…QRIH), 282-304 (YECN…RGIH), 310-332 (YHCK…QRIH), 338-360 (YQCS…QRSH), and 366-388 (HQCI…QKIH).

Belongs to the krueppel C2H2-type zinc-finger protein family.

It is found in the nucleus. May be involved in transcriptional regulation. This is Zinc finger and SCAN domain-containing protein 9 (ZSCAN9) from Homo sapiens (Human).